A 595-amino-acid polypeptide reads, in one-letter code: Ketol-acid reductoisomerase, chloroplastic (595 aa).

The transit peptide at 1–72 (MAATAATTFS…GGGSALSAQM (72 aa)) directs the protein to the chloroplast. The KARI N-terminal Rossmann domain occupies 108–306 (VRGGRNLFPL…ALGSPFTFAT (199 aa)). Residues 129–136 (GVIGWGSQ), 162–167 (RKGSNS), and 201–205 (SDSAQ) contribute to the NADP(+) site. His-226 is an active-site residue. KARI C-terminal knotted domains follow at residues 307 to 455 (TLEQ…RPAG) and 456 to 592 (DLGP…RPEL). The Mg(2+) site is built by Asp-315, Glu-319, Glu-492, and Glu-496. Ser-518 serves as a coordination point for substrate.

Belongs to the ketol-acid reductoisomerase family. Homodimer. Mg(2+) is required as a cofactor.

The protein localises to the plastid. It localises to the chloroplast. The enzyme catalyses (2R)-2,3-dihydroxy-3-methylbutanoate + NADP(+) = (2S)-2-acetolactate + NADPH + H(+). It catalyses the reaction (2R,3R)-2,3-dihydroxy-3-methylpentanoate + NADP(+) = (S)-2-ethyl-2-hydroxy-3-oxobutanoate + NADPH + H(+). It participates in amino-acid biosynthesis; L-isoleucine biosynthesis; L-isoleucine from 2-oxobutanoate: step 2/4. Its pathway is amino-acid biosynthesis; L-valine biosynthesis; L-valine from pyruvate: step 2/4. This Spinacia oleracea (Spinach) protein is Ketol-acid reductoisomerase, chloroplastic (AHRI).